We begin with the raw amino-acid sequence, 399 residues long: Elongation factor Tu (399 aa).

A tr-type G domain is found at K10–E204. The tract at residues G19–T26 is G1. A GTP-binding site is contributed by G19–T26. T26 lines the Mg(2+) pocket. Positions G60–N64 are G2. A G3 region spans residues D81 to G84. GTP contacts are provided by residues D81–H85 and N136–D139. A G4 region spans residues N136–D139. Residues S174–L176 form a G5 region.

The protein belongs to the TRAFAC class translation factor GTPase superfamily. Classic translation factor GTPase family. EF-Tu/EF-1A subfamily. As to quaternary structure, monomer.

The protein localises to the cytoplasm. The catalysed reaction is GTP + H2O = GDP + phosphate + H(+). In terms of biological role, GTP hydrolase that promotes the GTP-dependent binding of aminoacyl-tRNA to the A-site of ribosomes during protein biosynthesis. The chain is Elongation factor Tu from Synechocystis sp. (strain ATCC 27184 / PCC 6803 / Kazusa).